Reading from the N-terminus, the 2175-residue chain is Genome polyprotein (2175 aa).

Glycine 2 is lipidated: N-myristoyl glycine; by host. Residues 2–1485 (GAQLSRNTAG…NVNRALAVIQ (1484 aa)) are Cytoplasmic-facing. 2 amphipathic alpha-helix regions span residues 557-574 (ILQN…DKQV) and 560-581 (NDPG…LVAG). Active-site for protease 2A activity residues include histidine 861 and aspartate 879. Zn(2+)-binding residues include cysteine 896 and cysteine 898. The For protease 2A activity role is filled by cysteine 950. The Zn(2+) site is built by cysteine 956 and histidine 958. Residues 1090–1162 (SDNWMKKFTE…EHSSASQERQ (73 aa)) form a membrane-binding region. The tract at residues 1090 to 1228 (SDNWMKKFTE…SPGTGQSLAT (139 aa)) is oligomerization. Positions 1111–1115 (AAKIS) are RNA-binding. The 159-residue stretch at 1194-1352 (EKRVLGAMQF…YKRDGVTLDV (159 aa)) folds into the SF3 helicase domain. Residues cysteine 1359, cysteine 1370, and cysteine 1375 each contribute to the Zn(2+) site. A C4-type; degenerate zinc finger spans residues 1359–1375 (CEDCSPANFKKCMPLIC). The RNA-binding stretch occupies residues 1403–1410 (ESNRRYNI). An oligomerization region spans residues 1414-1419 (LEALFQ). An intramembrane segment occupies 1486–1501 (SVSLIAAVAGTIYIVY). At 1502–2175 (RLFSGMQGPY…ALERKWYDSF (674 aa)) the chain is on the cytoplasmic side. Tyrosine 1511 bears the O-(5'-phospho-RNA)-tyrosine mark. The Peptidase C3 domain maps to 1532–1710 (GPLFDFGVSL…FAASLLRRYF (179 aa)). Catalysis depends on for protease 3C activity residues histidine 1571, glutamate 1602, and cysteine 1678. In terms of domain architecture, RdRp catalytic spans 1941-2056 (GELFGFDYTA…SYPYEIDASL (116 aa)). Residues aspartate 1947 and aspartate 2042 each coordinate Mg(2+).

This sequence belongs to the picornaviruses polyprotein family. As to quaternary structure, interacts with capsid protein VP1 and capsid protein VP3 to form heterotrimeric protomers. In terms of assembly, interacts with capsid protein VP0, and capsid protein VP3 to form heterotrimeric protomers. Five protomers subsequently associate to form pentamers which serve as building blocks for the capsid. Interacts with capsid protein VP2, capsid protein VP3 and capsid protein VP4 following cleavage of capsid protein VP0. Interacts with capsid protein VP1 and capsid protein VP3 in the mature capsid. As to quaternary structure, interacts with capsid protein VP0 and capsid protein VP1 to form heterotrimeric protomers. Five protomers subsequently associate to form pentamers which serve as building blocks for the capsid. Interacts with capsid protein VP4 in the mature capsid. Interacts with protein 2C; this interaction may be important for virion morphogenesis. In terms of assembly, interacts with capsid protein VP1 and capsid protein VP3. Homodimer. As to quaternary structure, homohexamer; forms a hexameric ring structure with 6-fold symmetry characteristic of AAA+ ATPases. Interacts (via N-terminus) with host RTN3 (via reticulon domain); this interaction is important for viral replication. Interacts with capsid protein VP3; this interaction may be important for virion morphogenesis. In terms of assembly, interacts with protein 3CD. Homodimer. Interacts with host GBF1. Interacts (via GOLD domain) with host ACBD3 (via GOLD domain); this interaction allows the formation of a viral protein 3A/ACBD3 heterotetramer with a 2:2 stoichiometry, which will stimulate the recruitment of host PI4KB in order to synthesize PI4P at the viral RNA replication sites. As to quaternary structure, interacts with RNA-directed RNA polymerase. In terms of assembly, interacts with protein 3AB and with RNA-directed RNA polymerase. Interacts with Viral protein genome-linked and with protein 3CD. Mg(2+) is required as a cofactor. Specific enzymatic cleavages in vivo by the viral proteases yield processing intermediates and the mature proteins. In terms of processing, myristoylation is required for the formation of pentamers during virus assembly. Further assembly of 12 pentamers and a molecule of genomic RNA generates the provirion. Post-translationally, during virion maturation, immature virions are rendered infectious following cleavage of VP0 into VP4 and VP2. This maturation seems to be an autocatalytic event triggered by the presence of RNA in the capsid and it is followed by a conformational change infectious virion. Myristoylation is required during RNA encapsidation and formation of the mature virus particle. In terms of processing, VPg is uridylylated by the polymerase into VPg-pUpU. This acts as a nucleotide-peptide primer for the genomic RNA replication.

The protein resides in the virion. It localises to the host cytoplasm. It is found in the host cytoplasmic vesicle membrane. The protein localises to the host nucleus. It carries out the reaction a ribonucleoside 5'-triphosphate + H2O = a ribonucleoside 5'-diphosphate + phosphate + H(+). It catalyses the reaction Selective cleavage of Tyr-|-Gly bond in the picornavirus polyprotein.. The enzyme catalyses RNA(n) + a ribonucleoside 5'-triphosphate = RNA(n+1) + diphosphate. The catalysed reaction is Selective cleavage of Gln-|-Gly bond in the poliovirus polyprotein. In other picornavirus reactions Glu may be substituted for Gln, and Ser or Thr for Gly.. With respect to regulation, replication or transcription is subject to high level of random mutations by the nucleotide analog ribavirin. Forms an icosahedral capsid of pseudo T=3 symmetry with capsid proteins VP2 and VP3. The capsid is 300 Angstroms in diameter, composed of 60 copies of each capsid protein and enclosing the viral positive strand RNA genome. Capsid protein VP1 mainly forms the vertices of the capsid. Capsid protein VP1 interacts with host cell receptor to provide virion attachment to target host cells. This attachment induces virion internalization. Tyrosine kinases are probably involved in the entry process. After binding to its receptor, the capsid undergoes conformational changes. Capsid protein VP1 N-terminus (that contains an amphipathic alpha-helix) and capsid protein VP4 are externalized. Together, they shape a pore in the host membrane through which viral genome is translocated to host cell cytoplasm. Functionally, forms an icosahedral capsid of pseudo T=3 symmetry with capsid proteins VP2 and VP3. The capsid is 300 Angstroms in diameter, composed of 60 copies of each capsid protein and enclosing the viral positive strand RNA genome. Its function is as follows. Lies on the inner surface of the capsid shell. After binding to the host receptor, the capsid undergoes conformational changes. Capsid protein VP4 is released, Capsid protein VP1 N-terminus is externalized, and together, they shape a pore in the host membrane through which the viral genome is translocated into the host cell cytoplasm. In terms of biological role, component of immature procapsids, which is cleaved into capsid proteins VP4 and VP2 after maturation. Allows the capsid to remain inactive before the maturation step. Cysteine protease that cleaves viral polyprotein and specific host proteins. It is responsible for the autocatalytic cleavage between the P1 and P2 regions, which is the first cleavage occurring in the polyprotein. Also cleaves the host translation initiation factor EIF4G1, in order to shut down the capped cellular mRNA translation. Inhibits the host nucleus-cytoplasm protein and RNA trafficking by cleaving host members of the nuclear pores. Counteracts stress granule formation probably by antagonizing its assembly or promoting its dissassembly. Functionally, plays an essential role in the virus replication cycle by acting as a viroporin. Creates a pore in the host endoplasmic reticulum and as a consequence releases Ca2+ in the cytoplasm of infected cell. In turn, high levels of cytoplasmic calcium may trigger membrane trafficking and transport of viral ER-associated proteins to viroplasms, sites of viral genome replication. Its function is as follows. Induces and associates with structural rearrangements of intracellular membranes. Displays RNA-binding, nucleotide binding and NTPase activities. May play a role in virion morphogenesis and viral RNA encapsidation by interacting with the capsid protein VP3. In terms of biological role, localizes the viral replication complex to the surface of membranous vesicles. Together with protein 3CD binds the Cis-Active RNA Element (CRE) which is involved in RNA synthesis initiation. Acts as a cofactor to stimulate the activity of 3D polymerase, maybe through a nucleid acid chaperone activity. Localizes the viral replication complex to the surface of membranous vesicles. It inhibits host cell endoplasmic reticulum-to-Golgi apparatus transport and causes the disassembly of the Golgi complex, possibly through GBF1 interaction. This would result in depletion of MHC, trail receptors and IFN receptors at the host cell surface. Plays an essential role in viral RNA replication by recruiting ACBD3 and PI4KB at the viral replication sites, thereby allowing the formation of the rearranged membranous structures where viral replication takes place. Functionally, acts as a primer for viral RNA replication and remains covalently bound to viral genomic RNA. VPg is uridylylated prior to priming replication into VPg-pUpU. The oriI viral genomic sequence may act as a template for this. The VPg-pUpU is then used as primer on the genomic RNA poly(A) by the RNA-dependent RNA polymerase to replicate the viral genome. During genome replication, the VPg-RNA linkage is removed by the host TDP2, thereby accelerating replication. During the late stage of the replication cycle, host TDP2 is excluded from sites of viral RNA synthesis and encapsidation, allowing for the generation of progeny virions. Its function is as follows. Involved in the viral replication complex and viral polypeptide maturation. It exhibits protease activity with a specificity and catalytic efficiency that is different from protease 3C. Protein 3CD lacks polymerase activity. Protein 3CD binds to the 5'UTR of the viral genome. In terms of biological role, replicates the viral genomic RNA on the surface of intracellular membranes. May form linear arrays of subunits that propagate along a strong head-to-tail interaction called interface-I. Covalently attaches UMP to a tyrosine of VPg, which is used to prime RNA synthesis. The positive stranded RNA genome is first replicated at virus induced membranous vesicles, creating a dsRNA genomic replication form. This dsRNA is then used as template to synthesize positive stranded RNA genomes. ss(+)RNA genomes are either translated, replicated or encapsidated. Major viral protease that mediates proteolytic processing of the polyprotein. Cleaves host EIF5B, contributing to host translation shutoff. Also cleaves host PABPC1, contributing to host translation shutoff. Cleaves host NLRP1, triggers host N-glycine-mediated degradation of the autoinhibitory NLRP1 N-terminal fragment. The protein is Genome polyprotein of Bos taurus (Bovine).